The sequence spans 310 residues: MNNKNHLKIATRQSPLALWQANYVKDRLTALYPDLQVELVTMVTKGDVILDTPLAKIGGKGLFVKELEHALLNHEADIAVHSMKDVPMEFPQGLGLSVICKREDPRDAFVSNKYRSLAELPQGAIVGTSSLRRQCQLKSLRPDLDIRSLRGNVGTRLSKLDNGDYDAIILASAGLIRLGMAERIASFIETDISLPAAGQGAVGIECRVDDELVQSLLAPLAHQETTICVLAERAMNNRLQGGCQVPIGGFAQVKNGEVFLRALVGATDGSQIIRAEGKSAVENAEVLGVQIAEDLLQQGADKILKSVYQD.

Residue cysteine 243 is modified to S-(dipyrrolylmethanemethyl)cysteine.

This sequence belongs to the HMBS family. In terms of assembly, monomer. Requires dipyrromethane as cofactor.

It catalyses the reaction 4 porphobilinogen + H2O = hydroxymethylbilane + 4 NH4(+). Its pathway is porphyrin-containing compound metabolism; protoporphyrin-IX biosynthesis; coproporphyrinogen-III from 5-aminolevulinate: step 2/4. In terms of biological role, tetrapolymerization of the monopyrrole PBG into the hydroxymethylbilane pre-uroporphyrinogen in several discrete steps. The sequence is that of Porphobilinogen deaminase from Mannheimia succiniciproducens (strain KCTC 0769BP / MBEL55E).